A 139-amino-acid polypeptide reads, in one-letter code: ATP synthase epsilon chain (139 aa).

This sequence belongs to the ATPase epsilon chain family. F-type ATPases have 2 components, CF(1) - the catalytic core - and CF(0) - the membrane proton channel. CF(1) has five subunits: alpha(3), beta(3), gamma(1), delta(1), epsilon(1). CF(0) has three main subunits: a, b and c.

Its subcellular location is the cell inner membrane. Functionally, produces ATP from ADP in the presence of a proton gradient across the membrane. The polypeptide is ATP synthase epsilon chain (Actinobacillus pleuropneumoniae serotype 7 (strain AP76)).